The following is a 1508-amino-acid chain: Calponin homology domain-containing protein DDB_G0272472 (1508 aa).

Disordered regions lie at residues 1 to 165 (MFRN…KNDF), 197 to 290 (DSEE…NLSP), 309 to 518 (DFKS…TSIV), 531 to 561 (AANA…LFND), 680 to 706 (KEKQ…EKEL), and 1036 to 1391 (KIEK…KKSA). A compositionally biased stretch (low complexity) spans 81–107 (SSSPSTSTTTTTKSSSTTTTTTTSSSS). Positions 208 to 222 (PIKKKQSNDLEKNIF) are enriched in basic and acidic residues. Low complexity-rich tracts occupy residues 234–251 (KQST…QKQP), 263–290 (FGDS…NLSP), and 315–332 (SNNT…KSKP). Composition is skewed to basic and acidic residues over residues 337–346 (QKEEIKEVST) and 362–371 (VDEKPKERST). The span at 380–391 (KTVTVKSNNSFE) shows a compositional bias: polar residues. Residues 395–438 (FGSTTTNDDGGDNDFSFTPATTPSSSSSTKATTTSPSSTTTTKS) are compositionally biased toward low complexity. Over residues 439-452 (NINIGQKSNKSVDQ) the composition is skewed to polar residues. A coiled-coil region spans residues 455-498 (QFLNDIFQQEEQDKKRREEEAKLKQQQKQKEKEQIKDEIDDLFK). The span at 465 to 498 (EQDKKRREEEAKLKQQQKQKEKEQIKDEIDDLFK) shows a compositional bias: basic and acidic residues. Low complexity-rich tracts occupy residues 500–516 (SKPT…STTS) and 531–557 (AANA…KSTN). The span at 1036-1164 (KIEKEKEERD…DQEEKEKQLK (129 aa)) shows a compositional bias: basic and acidic residues. Composition is skewed to low complexity over residues 1165 to 1181 (EQQQ…TTTT) and 1189 to 1206 (DSDA…SSHS). Positions 1216–1225 (SKAKGRKKPT) are enriched in basic residues. The span at 1226–1235 (RRELTKDGNR) shows a compositional bias: basic and acidic residues. The segment covering 1333 to 1355 (PTVTQTTTTTTTPPTTPPSSSVQ) has biased composition (low complexity). The segment covering 1362–1374 (RSFSGSSFMGINS) has biased composition (polar residues). The 108-residue stretch at 1397 to 1504 (MKALDVLLQW…YLSEFFKVMK (108 aa)) folds into the Calponin-homology (CH) domain.

The chain is Calponin homology domain-containing protein DDB_G0272472 from Dictyostelium discoideum (Social amoeba).